We begin with the raw amino-acid sequence, 259 residues long: Enkurin (259 aa).

Disordered stretches follow at residues 1–26 (MVAM…EPPQ) and 76–98 (PPKK…TDHP). Residues 76–88 (PPKKKFEWNERRK) are compositionally biased toward basic and acidic residues. Residues 86–92 (RRKPPVP) carry the SH3-binding motif. The region spanning 163–255 (KRNEEVKKAQ…VLEKHKVIYI (93 aa)) is the Enkurin domain. Residues 163–258 (KRNEEVKKAQ…KHKVIYIANK (96 aa)) form an interaction with TRPC proteins region. In terms of domain architecture, IQ spans 179-190 (IQENLRKAAMKR).

In terms of assembly, microtubule inner protein component of sperm flagellar doublet microtubules. Binds calmodulin via its IQ domain. Interacts with TRPC1, TRPC2, TRPC5, but not TRPC3. Interacts with CFAP45. In terms of tissue distribution, expressed in trachea multiciliated cells.

Its subcellular location is the cytoplasm. The protein localises to the cytoskeleton. It is found in the flagellum axoneme. It localises to the cilium axoneme. Functionally, adapter that functions to localize a calcium-sensitive signal transduction machinery in sperm to a calcium-permeable ion channel. Microtubule inner protein (MIP) part of the dynein-decorated doublet microtubules (DMTs) in cilia axoneme, which is required for motile cilia beating. This Bos taurus (Bovine) protein is Enkurin (ENKUR).